A 217-amino-acid chain; its full sequence is Adenylate kinase (217 aa).

An ATP-binding site is contributed by 11-16 (GSGKGT). Residues 31–61 (STGTMLRQALTRSTHKSYELHKNIMHTGDLV) are NMP. Residues threonine 32, arginine 37, 59–61 (DLV), 87–90 (GFPR), and glutamine 94 contribute to the AMP site. Residues 124–161 (GRRIHVGSGRTYHIKFNPPRNYGLDDITGEILTTRKDD) form an LID region. Residues arginine 125 and 134–135 (TY) each bind ATP. Residues arginine 158 and arginine 169 each coordinate AMP. Arginine 202 is a binding site for ATP.

It belongs to the adenylate kinase family. As to quaternary structure, monomer.

It is found in the cytoplasm. It carries out the reaction AMP + ATP = 2 ADP. Its pathway is purine metabolism; AMP biosynthesis via salvage pathway; AMP from ADP: step 1/1. Catalyzes the reversible transfer of the terminal phosphate group between ATP and AMP. Plays an important role in cellular energy homeostasis and in adenine nucleotide metabolism. The chain is Adenylate kinase from Blochmanniella pennsylvanica (strain BPEN).